We begin with the raw amino-acid sequence, 509 residues long: Maturase K (509 aa).

It belongs to the intron maturase 2 family. MatK subfamily.

The protein resides in the plastid. It is found in the chloroplast. In terms of biological role, usually encoded in the trnK tRNA gene intron. Probably assists in splicing its own and other chloroplast group II introns. The protein is Maturase K of Nicotiana tomentosiformis (Tobacco).